A 458-amino-acid polypeptide reads, in one-letter code: UDP-N-acetylmuramoylalanine--D-glutamate ligase (458 aa).

124 to 130 (GSDGKTT) serves as a coordination point for ATP.

The protein belongs to the MurCDEF family.

It localises to the cytoplasm. It carries out the reaction UDP-N-acetyl-alpha-D-muramoyl-L-alanine + D-glutamate + ATP = UDP-N-acetyl-alpha-D-muramoyl-L-alanyl-D-glutamate + ADP + phosphate + H(+). It participates in cell wall biogenesis; peptidoglycan biosynthesis. In terms of biological role, cell wall formation. Catalyzes the addition of glutamate to the nucleotide precursor UDP-N-acetylmuramoyl-L-alanine (UMA). The protein is UDP-N-acetylmuramoylalanine--D-glutamate ligase of Clostridium botulinum (strain Langeland / NCTC 10281 / Type F).